The sequence spans 451 residues: Probable tyrosyl-DNA phosphodiesterase (451 aa).

Positions M1–G34 are disordered. The segment covering L22–E32 has biased composition (polar residues). Catalysis depends on H131, which acts as the Nucleophile. K133 is a substrate binding site. The tract at residues S266 to S269 is interaction with DNA. H356 (proton donor/acceptor) is an active-site residue. K358 contacts substrate.

Belongs to the tyrosyl-DNA phosphodiesterase family.

The protein resides in the nucleus. In terms of biological role, DNA repair enzyme that can remove a variety of covalent adducts from DNA through hydrolysis of a 3'-phosphodiester bond, giving rise to DNA with a free 3' phosphate. Catalyzes the hydrolysis of dead-end complexes between DNA and the topoisomerase I active site tyrosine residue. Hydrolyzes 3'-phosphoglycolates on protruding 3' ends on DNA double-strand breaks due to DNA damage by radiation and free radicals. Acts on blunt-ended double-strand DNA breaks and on single-stranded DNA. May have low 3'exonuclease activity and may be able to remove a single nucleoside from the 3'end of DNA and RNA molecules with 3'hydroxyl groups. Has no exonuclease activity towards DNA or RNA with a 3'phosphate. The sequence is that of Probable tyrosyl-DNA phosphodiesterase from Caenorhabditis elegans.